The chain runs to 386 residues: MKILLLGSGELGKEFAIAAQRIGQTIIAVDNYPNAPAMQVAHQFEVINMLDGSELDRIVAKHQPDFIVPEIEAIRTERFYEYEKQGITVVPSAKAANFTMNRKAIRDLAAKELGLKTANYRYATSAEELQKGVQAVGMPCVVKPLMSSSGKGQSTIKTVEDIEKAWNYAVEGSRGDVVEVIVEAFVKFNSEITLLTVAQNNNPTLFCAPIGHRQERGDYQESWQPARISDKDLHEAQDMARKVTEALGGAGLFGVEFFLTNDGVYFSELSPRPHDTGMVTLAGTQNFNEFELHLRAILSLPIFDITLEKAGARAVILASENSNNPTYSGIENIACLPKSDFRIFGKPTSRPYRRMGVVLTNDTLETPIEEIVTRAKKMATLVKVNL.

N(1)-(5-phospho-beta-D-ribosyl)glycinamide is bound by residues 10-11 (EL) and glutamate 70. ATP is bound by residues arginine 102, lysine 143, 148 to 153 (SSGKGQ), 183 to 186 (EAFV), and glutamate 191. The region spanning 107 to 298 (DLAAKELGLK…EFELHLRAIL (192 aa)) is the ATP-grasp domain. Residues glutamate 256 and glutamate 268 each coordinate Mg(2+). N(1)-(5-phospho-beta-D-ribosyl)glycinamide is bound by residues aspartate 275, lysine 346, and 353–354 (RR).

The protein belongs to the PurK/PurT family. As to quaternary structure, homodimer.

It catalyses the reaction N(1)-(5-phospho-beta-D-ribosyl)glycinamide + formate + ATP = N(2)-formyl-N(1)-(5-phospho-beta-D-ribosyl)glycinamide + ADP + phosphate + H(+). It participates in purine metabolism; IMP biosynthesis via de novo pathway; N(2)-formyl-N(1)-(5-phospho-D-ribosyl)glycinamide from N(1)-(5-phospho-D-ribosyl)glycinamide (formate route): step 1/1. In terms of biological role, involved in the de novo purine biosynthesis. Catalyzes the transfer of formate to 5-phospho-ribosyl-glycinamide (GAR), producing 5-phospho-ribosyl-N-formylglycinamide (FGAR). Formate is provided by PurU via hydrolysis of 10-formyl-tetrahydrofolate. This is Formate-dependent phosphoribosylglycinamide formyltransferase from Flavobacterium psychrophilum (strain ATCC 49511 / DSM 21280 / CIP 103535 / JIP02/86).